Reading from the N-terminus, the 454-residue chain is Caspase-9 (454 aa).

In terms of domain architecture, CARD spans 1-92 (MDEADRQLLR…GTLASLLQSG (92 aa)). Residue Thr-163 is modified to Phosphothreonine; by MAPK1. At Tyr-191 the chain carries Phosphotyrosine; by ABL1. Catalysis depends on residues His-275 and Cys-325. 2 positions are modified to phosphoserine: Ser-340 and Ser-348. Residues 354 to 367 (AVPYQEGPRPLDQL) constitute a propeptide that is removed on maturation.

Belongs to the peptidase C14A family. In terms of assembly, heterotetramer that consists of two anti-parallel arranged heterodimers, each one formed by a 35 kDa (p35) and a 10 kDa (p10) subunit. Caspase-9 and APAF1 bind to each other via their respective NH2-terminal CED-3 homologous domains in the presence of cytochrome C and ATP. Interacts (inactive form) with EFHD2. Interacts with HAX1. Interacts with BIRC2/c-IAP1, XIAP/BIRC4, BIRC5/survivin, BIRC6/bruce and BIRC7/livin. Interacts with ABL1 (via SH3 domain); the interaction is direct and increased in the response of cells to genotoxic stress and ABL1/c-Abl activation. Interacts with BCL2L10. Post-translationally, cleavages at Asp-353 by granzyme B and at Asp-368 by caspase-3 generate the two active subunits. Caspase-8 and -10 can also be involved in these processing events. In terms of processing, phosphorylated at Thr-163 by MAPK1/ERK2. Phosphorylation at Thr-163 is sufficient to block caspase-9 processing and subsequent caspase-3 activation. Phosphorylation on Tyr-191 by ABL1/c-Abl; occurs in the response of cells to DNA damage. Ubiquitinated by BIRC6; this activity is inhibited by DIABLO/SMAC.

It carries out the reaction Strict requirement for an Asp residue at position P1 and with a marked preference for His at position P2. It has a preferred cleavage sequence of Leu-Gly-His-Asp-|-Xaa.. Its activity is regulated as follows. Inhibited by BIRC6; following inhibition of BIRC6-caspase binding by DIABLO/SMAC, BIRC6 is subjected to caspase cleavage, leading to an increase in active caspases. Its function is as follows. Involved in the activation cascade of caspases responsible for apoptosis execution. Binding of caspase-9 to Apaf-1 leads to activation of the protease which then cleaves and activates effector caspases caspase-3 (CASP3) or caspase-7 (CASP7). Promotes DNA damage-induced apoptosis in a ABL1/c-Abl-dependent manner. Proteolytically cleaves poly(ADP-ribose) polymerase (PARP). Cleaves BIRC6 following inhibition of BIRC6-caspase binding by DIABLO/SMAC. This chain is Caspase-9 (Casp9), found in Mus musculus (Mouse).